Consider the following 245-residue polypeptide: 1-(5-phosphoribosyl)-5-[(5-phosphoribosylamino)methylideneamino] imidazole-4-carboxamide isomerase (245 aa).

D7 functions as the Proton acceptor in the catalytic mechanism. The active-site Proton donor is the D129.

It belongs to the HisA/HisF family.

It is found in the cytoplasm. The enzyme catalyses 1-(5-phospho-beta-D-ribosyl)-5-[(5-phospho-beta-D-ribosylamino)methylideneamino]imidazole-4-carboxamide = 5-[(5-phospho-1-deoxy-D-ribulos-1-ylimino)methylamino]-1-(5-phospho-beta-D-ribosyl)imidazole-4-carboxamide. The protein operates within amino-acid biosynthesis; L-histidine biosynthesis; L-histidine from 5-phospho-alpha-D-ribose 1-diphosphate: step 4/9. The polypeptide is 1-(5-phosphoribosyl)-5-[(5-phosphoribosylamino)methylideneamino] imidazole-4-carboxamide isomerase (Escherichia coli O127:H6 (strain E2348/69 / EPEC)).